The following is a 205-amino-acid chain: Urease accessory protein UreG (205 aa).

Residue 14–21 participates in GTP binding; that stretch reads GPVGSGKT.

The protein belongs to the SIMIBI class G3E GTPase family. UreG subfamily. Homodimer. UreD, UreF and UreG form a complex that acts as a GTP-hydrolysis-dependent molecular chaperone, activating the urease apoprotein by helping to assemble the nickel containing metallocenter of UreC. The UreE protein probably delivers the nickel.

It localises to the cytoplasm. Facilitates the functional incorporation of the urease nickel metallocenter. This process requires GTP hydrolysis, probably effectuated by UreG. The polypeptide is Urease accessory protein UreG (Citrobacter koseri (strain ATCC BAA-895 / CDC 4225-83 / SGSC4696)).